Reading from the N-terminus, the 118-residue chain is Putative pterin-4-alpha-carbinolamine dehydratase (118 aa).

It belongs to the pterin-4-alpha-carbinolamine dehydratase family.

It carries out the reaction (4aS,6R)-4a-hydroxy-L-erythro-5,6,7,8-tetrahydrobiopterin = (6R)-L-erythro-6,7-dihydrobiopterin + H2O. The sequence is that of Putative pterin-4-alpha-carbinolamine dehydratase from Pseudomonas putida (strain ATCC 700007 / DSM 6899 / JCM 31910 / BCRC 17059 / LMG 24140 / F1).